We begin with the raw amino-acid sequence, 548 residues long: Chaperonin GroEL 2 (548 aa).

ATP contacts are provided by residues 29–32, 86–90, G418, 482–484, and D498; these read TLGP, DGTTT, and NAA.

It belongs to the chaperonin (HSP60) family. Forms a cylinder of 14 subunits composed of two heptameric rings stacked back-to-back. Interacts with the co-chaperonin GroES.

The protein resides in the cytoplasm. It catalyses the reaction ATP + H2O + a folded polypeptide = ADP + phosphate + an unfolded polypeptide.. Together with its co-chaperonin GroES, plays an essential role in assisting protein folding. The GroEL-GroES system forms a nano-cage that allows encapsulation of the non-native substrate proteins and provides a physical environment optimized to promote and accelerate protein folding. The chain is Chaperonin GroEL 2 from Corynebacterium glutamicum (strain ATCC 13032 / DSM 20300 / JCM 1318 / BCRC 11384 / CCUG 27702 / LMG 3730 / NBRC 12168 / NCIMB 10025 / NRRL B-2784 / 534).